The following is a 163-amino-acid chain: Small heat shock protein C4 (163 aa).

A sHSP domain is found at 53-163 (YNNKILSPRT…QSKAKKIKIS (111 aa)).

It belongs to the small heat shock protein (HSP20) family.

This chain is Small heat shock protein C4 (hspc4-1), found in Rickettsia felis (strain ATCC VR-1525 / URRWXCal2) (Rickettsia azadi).